The chain runs to 510 residues: MSHLVLTPGTLTLAQIREISRGKVTLELAESAIADINTSAGLVQQVLDEGRTVYGINTGFGLLANTKIAADDLQLLQRSIVLSHAAGTGQYMQDATVRLMMVLKINSLSRGFSGIRLEVINFLIALVNAGVYPCVPEKGSVGASGDLAPLSHMCLPLLGEGEMSYQGQLISAAEGLEIAGLKPIELAAKEGLALLNGTQASTALALEGLFNAEDLFAASSVIGAMSVEAAMGSRSPFDPRIHAARGQKGQIDSAAVFRHLLGGESEISLDHVNCEKVQDPYSLRCQPQVLGACLTQIRHAAEVLGTEANGVTDNPLVFQDTGDIISGGNFHAEPVAMAADNLAIAIAELGSIAERRIALLIDSNLSKLPPFLVENGGVNSGFMIAQVTAAALASENKTYAHPASVDSLPTSANQEDHVSMATFAARRLRDMSENTRGVLAVELLAAAQGLDFRAPLQPSKAVAQAKGELRELVSYYDKDRFFGPDIEAATDLLLTASYNAYLPAEILPSL.

The segment at residues 143–145 (ASG) is a cross-link (5-imidazolinone (Ala-Gly)). Residue Ser144 is modified to 2,3-didehydroalanine (Ser).

It belongs to the PAL/histidase family. In terms of processing, contains an active site 4-methylidene-imidazol-5-one (MIO), which is formed autocatalytically by cyclization and dehydration of residues Ala-Ser-Gly.

It is found in the cytoplasm. It carries out the reaction L-histidine = trans-urocanate + NH4(+). Its pathway is amino-acid degradation; L-histidine degradation into L-glutamate; N-formimidoyl-L-glutamate from L-histidine: step 1/3. The sequence is that of Histidine ammonia-lyase from Shewanella pealeana (strain ATCC 700345 / ANG-SQ1).